The chain runs to 190 residues: Glutathione peroxidase 2 (190 aa).

Sec40 is an active-site residue. A non-standard amino acid (selenocysteine) is located at residue Sec40.

Belongs to the glutathione peroxidase family. As to quaternary structure, homotetramer. Mucosal epithelium of the gastrointestinal tract.

Its subcellular location is the cytoplasm. It localises to the cytosol. It carries out the reaction 2 glutathione + H2O2 = glutathione disulfide + 2 H2O. The catalysed reaction is a hydroperoxy polyunsaturated fatty acid + 2 glutathione = a hydroxy polyunsaturated fatty acid + glutathione disulfide + H2O. The enzyme catalyses tert-butyl hydroperoxide + 2 glutathione = tert-butanol + glutathione disulfide + H2O. It catalyses the reaction cumene hydroperoxide + 2 glutathione = 2-phenylpropan-2-ol + glutathione disulfide + H2O. It carries out the reaction (13S)-hydroperoxy-(9Z,11E)-octadecadienoate + 2 glutathione = (13S)-hydroxy-(9Z,11E)-octadecadienoate + glutathione disulfide + H2O. The catalysed reaction is (5S)-hydroperoxy-(6E,8Z,11Z,14Z)-eicosatetraenoate + 2 glutathione = (5S)-hydroxy-(6E,8Z,11Z,14Z)-eicosatetraenoate + glutathione disulfide + H2O. The enzyme catalyses (12R)-hydroperoxy-(5Z,8Z,10E,14Z)-eicosatetraenoate + 2 glutathione = (12R)-hydroxy-(5Z,8Z,10E,14Z)-eicosatetraenoate + glutathione disulfide + H2O. It catalyses the reaction (15S)-hydroperoxy-(5Z,8Z,11Z,13E)-eicosatetraenoate + 2 glutathione = (15S)-hydroxy-(5Z,8Z,11Z,13E)-eicosatetraenoate + glutathione disulfide + H2O. Functionally, catalyzes the reduction of hydroperoxides in a glutathione-dependent manner thus regulating cellular redox homeostasis. Can reduce small soluble hydroperoxide such as H2O2. Can reduce cumene hydroperoxide and tert-butyl hydroperoxide, as well as several fatty acid-derived hydroperoxides. Cannot reduce phosphatidycholine hydroperoxide. This chain is Glutathione peroxidase 2 (Gpx2), found in Rattus norvegicus (Rat).